A 257-amino-acid polypeptide reads, in one-letter code: METIITAISAPIKTLAEWLETTHNVPQAQTMTKWFEILDPNSMSTFQPENLINMVPGPSTPPPEPVSQRAGEGDVLANLVQELMISDEEGDNRPLPTPLVEEDNRPPTPLPEEDDRPLSPLPIRRRQEAQQQPEPSSSSTERPVCLYTFRIGRRCTTRPRQGQYCAAHKRADPMFSENLARSTPLGTEESRPQAKPTPTSQLTDGQQWDENALTAQEANLSSGPKLIRLLGLCKTRQILKPNNTINYDSDLQLFEMD.

Disordered stretches follow at residues 86-119 and 182-206; these read SDEE…RPLS and STPL…TDGQ. Over residues 196-206 the composition is skewed to polar residues; sequence PTPTSQLTDGQ.

This is an uncharacterized protein from Invertebrate iridescent virus 3 (IIV-3).